The chain runs to 342 residues: Prenyl transferase penC (342 aa).

The chain crosses the membrane as a helical span at residues 17–37 (LSYLTLTVGALALVVVLYISI). Isopentenyl diphosphate is bound at residue His-110. Residues Asp-117 and Asp-121 each coordinate Mg(2+). Arg-126 contributes to the dimethylallyl diphosphate binding site. Asn-154 carries N-linked (GlcNAc...) asparagine glycosylation. Lys-210 lines the dimethylallyl diphosphate pocket.

Belongs to the FPP/GGPP synthase family.

It is found in the membrane. It participates in secondary metabolite biosynthesis. Functionally, prenyl transferase; part of the gene cluster that mediates the biosynthesis of the indole diterpenes penitrems. The geranylgeranyl diphosphate (GGPP) synthase penG catalyzes the first step in penitrem biosynthesis via conversion of farnesyl pyrophosphate and isopentyl pyrophosphate into geranylgeranyl pyrophosphate (GGPP). Condensation of indole-3-glycerol phosphate with GGPP by the prenyl transferase penC then forms 3-geranylgeranylindole (3-GGI). Epoxidation by the FAD-dependent monooxygenase penM leads to a epoxidized-GGI that is substrate of the terpene cyclase penB for cyclization to yield paspaline. Paspaline is subsequently converted to 13-desoxypaxilline by the cytochrome P450 monooxygenase penP, the latter being then converted to paxilline by the cytochrome P450 monooxygenase penQ. Paxilline is converted to beta-paxitriol via C-10 ketoreduction by the short-chain dehydrogenase PC-15 which can be monoprenylated at the C-20 by the indole diterpene prenyltransferase penD. A two-step elimination (acetylation and elimination) process performed by the O-acetyltransferase PC-16 and the P.simplicissimum ptmI-ortholog not yet identified in P.crustosum, leads to the production of the prenylated form of penijanthine. The FAD-linked oxidoreductase ptmO then converts the prenylated form of penijanthine into PC-M5 which is in turn transformed into PC-M4 by the aromatic dimethylallyltransferase PC-22. A series of oxidation steps involving 4 cytochrome P450 monooxygenases (PC-21, PC-05, PC-23, PC-20) and a FAD-dependent monooxygenase (PC-14) are required for the transformation of PC-M4 to penitrems A and E. Synthesis of these final products is proposed to proceed via penitrems D and C (PC-21, PC-05, PC-14) and penitrems B and F (PC-21, PC-05, PC-14, PC-23). In Penicillium crustosum (Blue mold fungus), this protein is Prenyl transferase penC.